Reading from the N-terminus, the 578-residue chain is Kelch-like protein 30 (578 aa).

Positions 33 to 100 (ADVTLLVGGR…VYTGRLTITQ (68 aa)) constitute a BTB domain. One can recognise a BACK domain in the interval 153-255 (KAWAFLRENF…EACRAALSQG (103 aa)). Kelch repeat units follow at residues 270–326 (VLVV…ALNN), 327–377 (NIYV…ALNG), 378–422 (EIYV…GCRG), 424–471 (LYLV…ALHG), 473–513 (LYLI…PLGD), and 514–563 (ALYV…TVFL).

The chain is Kelch-like protein 30 (KLHL30) from Homo sapiens (Human).